The following is a 150-amino-acid chain: Large ribosomal subunit protein bL9 (150 aa).

Belongs to the bacterial ribosomal protein bL9 family.

Its function is as follows. Binds to the 23S rRNA. The protein is Large ribosomal subunit protein bL9 of Shewanella sediminis (strain HAW-EB3).